The sequence spans 856 residues: 3-hydroxy-3-methylglutaryl-coenzyme A reductase (856 aa).

The next 4 helical transmembrane spans lie at phenylalanine 12–leucine 32, isoleucine 89–isoleucine 109, leucine 123–leucine 143, and valine 190–tyrosine 210. N-linked (GlcNAc...) asparagine glycosylation is present at asparagine 326. The chain crosses the membrane as a helical span at residues serine 344–phenylalanine 364. The tract at residues glutamate 365 to glycine 443 is linker. Asparagine 412 carries an N-linked (GlcNAc...) asparagine glycan. Positions glycine 443–glycine 771 are catalytic. Residues glutamate 528 and lysine 659 each act as charge relay system in the active site. N-linked (GlcNAc...) asparagine glycosylation occurs at asparagine 700. Residue aspartate 735 is the Charge relay system of the active site. Histidine 834 (proton donor) is an active-site residue. The segment at arginine 836–serine 856 is disordered. Asparagine 838 carries N-linked (GlcNAc...) asparagine glycosylation. Over residues serine 840 to serine 856 the composition is skewed to low complexity.

The protein belongs to the HMG-CoA reductase family.

It is found in the endoplasmic reticulum membrane. The catalysed reaction is (R)-mevalonate + 2 NADP(+) + CoA = (3S)-3-hydroxy-3-methylglutaryl-CoA + 2 NADPH + 2 H(+). Its pathway is metabolic intermediate biosynthesis; (R)-mevalonate biosynthesis; (R)-mevalonate from acetyl-CoA: step 3/3. Its activity is regulated as follows. The activity of HMG-CoA-reductase is suppressed by exogenous mevalonate. In terms of biological role, synthesis of mevalonate for the production of non-sterol isoprenoids, which are essential for growth differentiation. The protein is 3-hydroxy-3-methylglutaryl-coenzyme A reductase of Blattella germanica (German cockroach).